Reading from the N-terminus, the 208-residue chain is Ion-translocating oxidoreductase complex subunit G (208 aa).

A helical membrane pass occupies residues 9-29 (GVTLAVFAALTTGLTAMVNAL). T174 carries the post-translational modification FMN phosphoryl threonine.

It belongs to the RnfG family. In terms of assembly, the complex is composed of six subunits: RnfA, RnfB, RnfC, RnfD, RnfE and RnfG. FMN serves as cofactor.

It localises to the cell inner membrane. Part of a membrane-bound complex that couples electron transfer with translocation of ions across the membrane. In Cronobacter sakazakii (strain ATCC BAA-894) (Enterobacter sakazakii), this protein is Ion-translocating oxidoreductase complex subunit G.